The chain runs to 120 residues: MKLTRRESKQRRHRRVRGKVQGSPERPRLAVFRSNEHIYAQVIDDTQHHTLVSASTVEPEVKSSLASGANCEASSQIGKLIAVRSLEKGITKVVFDRGGNLYHGRIKALAEAAREAGLDF.

The segment at 1 to 26 (MKLTRRESKQRRHRRVRGKVQGSPER) is disordered. Residues 8 to 18 (SKQRRHRRVRG) are compositionally biased toward basic residues.

Belongs to the universal ribosomal protein uL18 family. In terms of assembly, part of the 50S ribosomal subunit; part of the 5S rRNA/L5/L18/L25 subcomplex. Contacts the 5S and 23S rRNAs.

Functionally, this is one of the proteins that bind and probably mediate the attachment of the 5S RNA into the large ribosomal subunit, where it forms part of the central protuberance. In Trichormus variabilis (strain ATCC 29413 / PCC 7937) (Anabaena variabilis), this protein is Large ribosomal subunit protein uL18.